Consider the following 686-residue polypeptide: MIQSFLKQVSTKPELIILVLMVMIIAMLIIPLPTYLVDFLIGLNIVLAILVFMGSFYIERILSFSTFPSVLLITTLFRLALSISTSRLILVDADAGKIITTFGQFVIGDSLAVGFVIFSIVTVVQFIVITKGSERVAEVAARFSLDGMPGKQMSIDADLKAGIIDAAGAKERRSILERESQLYGSFDGAMKFIKGDAIAGIIIIFVNLIGGISVGMSQHGMSLSGALSTYTILTIGDGLVSQIPALLISISAGFIVTRVNGDSDNMGRNIMSQIFGNPFVLIVTSALALAIGMLPGFPFFVFFLIAVTLTALFYYKKVVEKEKSLSESDSSGYTGTFDIDNSHDSSLAMIENLDAISSETVPLILLFAENKINANDMEGLIERIRSQFFIDYGVRLPTILYRTSNELKVDDIVLLINEVRADSFNIYFDKVCITDENGDIDALGIPVVSTSYNERVISWVDVSYTENLTNIDAKIKSAQDEFYHQLSQALLNNINEIFGIQETKNMLDQFENRYPDLLKEVFRHVTIQRISEVLQRLLGENISVRNLKLIMESLALWAPREKDVITLVEHVRASLSRYICSKIAVSGEIKVVMLSGYIEDAIRKGIRQTSGGSFLNMDIEVSDEVMETLAHALRELRNAKKNFVLLVSVDIRRFVKRLIDNRFKSILVISYAEIDEAYTINVLKTI.

A run of 6 helical transmembrane segments spans residues 28 to 52 (LIIP…ILVF), 105 to 129 (FVIG…FIVI), 197 to 216 (AIAG…SVGM), 232 to 256 (ILTI…GFIV), 274 to 292 (IFGN…LAIG), and 299 to 315 (FFVF…LFYY).

This sequence belongs to the FHIPEP (flagella/HR/invasion proteins export pore) family.

Its subcellular location is the cell inner membrane. Necessary for the secretion of IPA invasins. In Shigella flexneri, this protein is Protein MxiA (mxiA).